We begin with the raw amino-acid sequence, 297 residues long: Mycothiol acetyltransferase (297 aa).

Position 35 (Glu-35) interacts with 1D-myo-inositol 2-(L-cysteinylamino)-2-deoxy-alpha-D-glucopyranoside. 73–75 (MLV) is a binding site for acetyl-CoA. One can recognise an N-acetyltransferase domain in the interval 155–297 (LRTFGGTEAE…VAVHAQYGIP (143 aa)). Residues Glu-181, Lys-222, and Glu-230 each contribute to the 1D-myo-inositol 2-(L-cysteinylamino)-2-deoxy-alpha-D-glucopyranoside site. Acetyl-CoA contacts are provided by residues 234–236 (LGV) and 241–247 (QGRGLGR). Tyr-268 is a 1D-myo-inositol 2-(L-cysteinylamino)-2-deoxy-alpha-D-glucopyranoside binding site.

This sequence belongs to the acetyltransferase family. MshD subfamily. In terms of assembly, monomer.

It catalyses the reaction 1D-myo-inositol 2-(L-cysteinylamino)-2-deoxy-alpha-D-glucopyranoside + acetyl-CoA = mycothiol + CoA + H(+). Its function is as follows. Catalyzes the transfer of acetyl from acetyl-CoA to desacetylmycothiol (Cys-GlcN-Ins) to form mycothiol. In Beutenbergia cavernae (strain ATCC BAA-8 / DSM 12333 / CCUG 43141 / JCM 11478 / NBRC 16432 / NCIMB 13614 / HKI 0122), this protein is Mycothiol acetyltransferase.